A 141-amino-acid chain; its full sequence is Large ribosomal subunit protein uL23B (141 aa).

Residues 1 to 22 (MSVGKAKGAQKTVQKGIHNKVA) are disordered.

Belongs to the universal ribosomal protein uL23 family. In terms of assembly, component of the large ribosomal subunit (LSU). Mature yeast ribosomes consist of a small (40S) and a large (60S) subunit. The 40S small subunit contains 1 molecule of ribosomal RNA (18S rRNA) and at least 33 different proteins. The large 60S subunit contains 3 rRNA molecules (25S, 5.8S and 5S rRNA) and at least 46 different proteins. uL23 is associated with the polypeptide exit tunnel.

It is found in the cytoplasm. Its function is as follows. This protein binds to a specific region on the 26S rRNA. In terms of biological role, component of the ribosome, a large ribonucleoprotein complex responsible for the synthesis of proteins in the cell. The small ribosomal subunit (SSU) binds messenger RNAs (mRNAs) and translates the encoded message by selecting cognate aminoacyl-transfer RNA (tRNA) molecules. The large subunit (LSU) contains the ribosomal catalytic site termed the peptidyl transferase center (PTC), which catalyzes the formation of peptide bonds, thereby polymerizing the amino acids delivered by tRNAs into a polypeptide chain. The nascent polypeptides leave the ribosome through a tunnel in the LSU and interact with protein factors that function in enzymatic processing, targeting, and the membrane insertion of nascent chains at the exit of the ribosomal tunnel. uL23 is a major component of the universal docking site for these factors at the polypeptide exit tunnel. The sequence is that of Large ribosomal subunit protein uL23B (rpl2502) from Schizosaccharomyces pombe (strain 972 / ATCC 24843) (Fission yeast).